Reading from the N-terminus, the 1477-residue chain is Neuralized-like protein 4 (1477 aa).

Disordered stretches follow at residues 1–26 (MAEL…RKQP) and 168–196 (QPPP…RPDK). The NHR 1 domain maps to 1–167 (MAELHPRTGK…KCTQITVLSC (167 aa)). Residues 171–183 (PEEEEEEDAEEQE) are compositionally biased toward acidic residues. 4 NHR domains span residues 250–417 (ALLF…IVHN), 450–616 (QLLF…IMDE), 645–813 (DLRF…LTGG), and 841–1010 (SHRF…TVSS). Residues 1012–1041 (LLEEPDATKPPSITSESEEEEDPADHGDPH) form a disordered region. In terms of domain architecture, NHR 6 spans 1048–1211 (SLQFLANHGK…QCEQVSIVTG (164 aa)).

In terms of processing, ubiquitinated. This ubiquitination leads to proteasomal degradation.

The protein localises to the cytoplasm. Its subcellular location is the cytoskeleton. The protein resides in the microtubule organizing center. It is found in the centrosome. It localises to the centriole. In terms of biological role, promotes CCP110 ubiquitination and proteasome-dependent degradation. By counteracting accumulation of CP110, maintains normal centriolar homeostasis and preventing formation of ectopic microtubular organizing centers. The chain is Neuralized-like protein 4 (neurl4) from Xenopus tropicalis (Western clawed frog).